The chain runs to 1090 residues: Solute carrier family 38 member 10 (1090 aa).

10 consecutive transmembrane segments (helical) span residues 9-31 (WGLI…PFCF), 36-58 (IVLG…MFLV), 84-104 (LVET…YVVI), 123-143 (TVRV…LSLQ), 153-173 (FSAM…LSSL), 229-249 (IFAS…FFGY), 272-292 (MIRV…ILPC), 323-343 (VLTL…PNVE), 345-365 (ILGF…PALI), and 378-398 (VVLW…LSVT). Phosphoserine is present on S441. Composition is skewed to basic and acidic residues over residues 441-454 (SQEK…KEVL), 493-508 (EAHR…KVVV), 517-528 (PEEKKPPPRLPD), 544-560 (ESEK…EGKR), 587-596 (PRKEDSRPGN), and 607-623 (DSVE…REPA). 3 disordered regions span residues 441–675 (SQEK…AGSK), 729–831 (EIRQ…IDLR), and 857–1037 (KAAP…ELAP). Phosphoserine occurs at positions 608 and 636. Basic and acidic residues-rich tracts occupy residues 654-665 (EAAEQREKKEAE), 729-744 (EIRQ…KPKP), and 758-767 (GQEEEAEHAG). T769 is modified (phosphothreonine). At S887 the chain carries Phosphoserine. Residues 923–936 (RQSGPTKAPVQTQA) are compositionally biased toward polar residues. 3 stretches are compositionally biased toward basic and acidic residues: residues 954 to 973 (PEVR…EQHK), 1004 to 1013 (ENAKPNRDLK), and 1026 to 1037 (DLASHPEQELAP).

The protein belongs to the amino acid/polyamine transporter 2 family. Expressed in neurons, astrocytes and epithelial cells scattered throughout the central nervous system structures including striatum, ependyma, cerebral cortex, hippocampus, hypothalamus, thalamus, pons, and cerebellum (at protein level). Highly expressed in paraventricular hypothalamic nucleus, suprachiasmatic nucleus, anterior hypothalamic area central part, in lateral ventricule and in dorsal 3rd ventricule (at protein level). Expressed in choroid plexus epithelial cells (at protein level).

The protein localises to the membrane. It catalyses the reaction L-glutamate(out) = L-glutamate(in). It carries out the reaction L-glutamine(out) = L-glutamine(in). The catalysed reaction is L-alanine(in) = L-alanine(out). The enzyme catalyses L-serine(in) = L-serine(out). It catalyses the reaction L-leucine(in) = L-leucine(out). Functionally, facilitates bidirectional transport of amino acids. May act as a glutamate sensor that regulates glutamate-glutamine cycle and mTOR signaling in the brain. The transport mechanism remains to be elucidated. The protein is Solute carrier family 38 member 10 of Mus musculus (Mouse).